A 521-amino-acid chain; its full sequence is Probable cytosol aminopeptidase (521 aa).

Positions 268 and 273 each coordinate Mn(2+). Lysine 280 is an active-site residue. Residues aspartate 291, aspartate 350, and glutamate 352 each coordinate Mn(2+). Arginine 354 is a catalytic residue.

This sequence belongs to the peptidase M17 family. Mn(2+) is required as a cofactor.

The protein localises to the cytoplasm. The catalysed reaction is Release of an N-terminal amino acid, Xaa-|-Yaa-, in which Xaa is preferably Leu, but may be other amino acids including Pro although not Arg or Lys, and Yaa may be Pro. Amino acid amides and methyl esters are also readily hydrolyzed, but rates on arylamides are exceedingly low.. It carries out the reaction Release of an N-terminal amino acid, preferentially leucine, but not glutamic or aspartic acids.. Presumably involved in the processing and regular turnover of intracellular proteins. Catalyzes the removal of unsubstituted N-terminal amino acids from various peptides. This chain is Probable cytosol aminopeptidase, found in Chromobacterium violaceum (strain ATCC 12472 / DSM 30191 / JCM 1249 / CCUG 213 / NBRC 12614 / NCIMB 9131 / NCTC 9757 / MK).